Here is a 271-residue protein sequence, read N- to C-terminus: Formamidopyrimidine-DNA glycosylase (271 aa).

Proline 2 acts as the Schiff-base intermediate with DNA in catalysis. Catalysis depends on glutamate 3, which acts as the Proton donor. The active-site Proton donor; for beta-elimination activity is lysine 56. The DNA site is built by histidine 89, arginine 107, and arginine 151. The FPG-type zinc finger occupies 236 to 270 (MVYDRAGLPCRVCAAPIKSIRQGQRSSFYCATCQK). The active-site Proton donor; for delta-elimination activity is the arginine 260.

The protein belongs to the FPG family. In terms of assembly, monomer. Zn(2+) is required as a cofactor.

The catalysed reaction is Hydrolysis of DNA containing ring-opened 7-methylguanine residues, releasing 2,6-diamino-4-hydroxy-5-(N-methyl)formamidopyrimidine.. The enzyme catalyses 2'-deoxyribonucleotide-(2'-deoxyribose 5'-phosphate)-2'-deoxyribonucleotide-DNA = a 3'-end 2'-deoxyribonucleotide-(2,3-dehydro-2,3-deoxyribose 5'-phosphate)-DNA + a 5'-end 5'-phospho-2'-deoxyribonucleoside-DNA + H(+). Functionally, involved in base excision repair of DNA damaged by oxidation or by mutagenic agents. Acts as a DNA glycosylase that recognizes and removes damaged bases. Has a preference for oxidized purines, such as 7,8-dihydro-8-oxoguanine (8-oxoG). Has AP (apurinic/apyrimidinic) lyase activity and introduces nicks in the DNA strand. Cleaves the DNA backbone by beta-delta elimination to generate a single-strand break at the site of the removed base with both 3'- and 5'-phosphates. In Polaromonas naphthalenivorans (strain CJ2), this protein is Formamidopyrimidine-DNA glycosylase.